The following is a 517-amino-acid chain: Bifunctional purine biosynthesis protein PurH (517 aa).

One can recognise an MGS-like domain in the interval 1 to 146 (MGRLVLLSVS…KNFAHLTVLC (146 aa)).

The protein belongs to the PurH family.

It carries out the reaction (6R)-10-formyltetrahydrofolate + 5-amino-1-(5-phospho-beta-D-ribosyl)imidazole-4-carboxamide = 5-formamido-1-(5-phospho-D-ribosyl)imidazole-4-carboxamide + (6S)-5,6,7,8-tetrahydrofolate. The catalysed reaction is IMP + H2O = 5-formamido-1-(5-phospho-D-ribosyl)imidazole-4-carboxamide. It participates in purine metabolism; IMP biosynthesis via de novo pathway; 5-formamido-1-(5-phospho-D-ribosyl)imidazole-4-carboxamide from 5-amino-1-(5-phospho-D-ribosyl)imidazole-4-carboxamide (10-formyl THF route): step 1/1. It functions in the pathway purine metabolism; IMP biosynthesis via de novo pathway; IMP from 5-formamido-1-(5-phospho-D-ribosyl)imidazole-4-carboxamide: step 1/1. The chain is Bifunctional purine biosynthesis protein PurH from Gloeothece citriformis (strain PCC 7424) (Cyanothece sp. (strain PCC 7424)).